The primary structure comprises 298 residues: Ketohexokinase (298 aa).

4 residues coordinate beta-D-fructose: aspartate 15, glycine 41, asparagine 42, and asparagine 45. ATP contacts are provided by residues arginine 108, 226–229 (AEEG), and 255–258 (GAGD). Aspartate 258 lines the beta-D-fructose pocket.

This sequence belongs to the carbohydrate kinase PfkB family. In terms of assembly, homodimer. As to expression, most abundant in liver, kidney, gut, spleen and pancreas. Low levels also found in adrenal, muscle, brain and eye.

The enzyme catalyses beta-D-fructose + ATP = beta-D-fructose 1-phosphate + ADP + H(+). It functions in the pathway carbohydrate metabolism; fructose metabolism. Its activity is regulated as follows. Requires potassium. Inhibition by ADP. In terms of biological role, catalyzes the phosphorylation of the ketose sugar fructose to fructose-1-phosphate. This Homo sapiens (Human) protein is Ketohexokinase.